We begin with the raw amino-acid sequence, 336 residues long: Abasic site processing protein HMCES (336 aa).

The active-site Nucleophile is the C2. C2 is modified (thiazolidine linkage to a ring-opened DNA abasic site). Positions 29–38 are enriched in basic and acidic residues; sequence QPEWLREGRY. The disordered stretch occupies residues 29–52; it reads QPEWLREGRYRPSYNKGPQSSGPV. E127 is an active-site residue. A disordered region spans residues 283-336; sequence LKSSQEGSPQKKEDTLPRWKSQFIHSPSPKKSSAGILRQWLGQEGGPPAKKQKA.

It belongs to the SOS response-associated peptidase family.

It is found in the chromosome. With respect to regulation, formation and reversal of DNA-protein cross-link depends on DNA context. Catalyzes formation of the thiazolidine linkage in presence of abasic sites in single-stranded DNA. Mediates the reversal of the thiazolidine cross-link in presence of double stranded DNA. Its function is as follows. Sensor of abasic sites in single-stranded DNA (ssDNA) required to preserve genome integrity by promoting error-free repair of abasic sites. Acts as an enzyme that recognizes and binds abasic sites in ssDNA at replication forks and chemically modifies the lesion by forming a covalent cross-link with DNA: forms a stable thiazolidine linkage between a ring-opened abasic site and the alpha-amino and sulfhydryl substituents of its N-terminal catalytic cysteine residue. The HMCES DNA-protein cross-link is then either reversed or degraded. HMCES is able to catalyze the reversal of its thiazolidine cross-link and cycle between a cross-link and a non-cross-linked state depending on DNA context: mediates self-reversal of the thiazolidine cross-link in double stranded DNA, allowing APEX1 to initiate downstream repair of abasic sites. The HMCES DNA-protein cross-link can also be degraded by the SPRTN metalloprotease following unfolding by the BRIP1/FANCJ helicase. Promotes error-free repair of abasic sites by protecting abasic sites from translesion synthesis (TLS) polymerases and endonucleases that are error-prone and would generate mutations and double-strand breaks. Acts as a protease: mediates autocatalytic processing of its N-terminal methionine in order to expose the catalytic cysteine. The HMCES DNA-protein cross-link is then either reversed or degraded. According to a model, the HMCES DNA-protein cross-link. The polypeptide is Abasic site processing protein HMCES (Gallus gallus (Chicken)).